The sequence spans 496 residues: 4-O-methyl-glucuronoyl methylesterase 1 (496 aa).

The signal sequence occupies residues 1–19; the sequence is MKSTVASALLVLAGTAVQA. Positions 20-55 constitute a CBM1 domain; that stretch reads QSGPWQQCGGIGWQGPFTCVSGHTCQVLNDWYHQCV. Residues 57–151 form a disordered region; sequence GGGPSPPPTS…RLPDPFTFHN (95 aa). Over residues 59-125 the composition is skewed to pro residues; sequence GPSPPPTSPP…SPPPTSPPPS (67 aa). Disulfide bonds link Cys-129/Cys-163, Cys-307/Cys-443, and Cys-339/Cys-415. Positions 306–311 match the GXSYXG catalytic site motif motif; the sequence is GCSRNG. Ser-308 acts as the Nucleophile in catalysis. Substrate is bound by residues Lys-312, Gln-354, Glu-362, and Trp-406. Catalysis depends on His-442, which acts as the Proton donor/acceptor.

This sequence belongs to the carbohydrate esterase 15 (CE15) family.

Its subcellular location is the secreted. The enzyme catalyses a 4-O-methyl-alpha-D-glucuronosyl ester derivative + H2O = 4-O-methyl-alpha-D-glucuronate derivative + an alcohol + H(+). In terms of biological role, glucuronoyl esterase which may play a significant role in biomass degradation, as it is considered to disconnect hemicellulose from lignin through the hydrolysis of the ester bond between 4-O-methyl-D-glucuronic acid residues of glucuronoxylans and aromatic alcohols of lignin. Cleaves native lignin-carbohydrate (LC) ester bonds from LC complex preparations of spruce (softwood) and birch (hardwood), containing mainly hemicelluloses with partially acetylated glucomannans in spruce and partially acetylated xylan in birch. Can hydrolyze benzyl glucuronic acid (BnGlcA), allyl glucuronic acid (allylGlcA) and to a lower degree methyl glucuronic acid (MeGlcA) in vitro. The protein is 4-O-methyl-glucuronoyl methylesterase 1 of Sodiomyces alcalophilus (Acremonium alcalophilum).